Reading from the N-terminus, the 305-residue chain is Tyrosine recombinase XerC (305 aa).

The region spanning 1–84 is the Core-binding (CB) domain; that stretch reads MNEVFESYLT…TLRGFYKYAL (84 aa). Positions 105 to 299 constitute a Tyr recombinase domain; that stretch reads KLPVFMFPKQ…TAEQLQNLYK (195 aa). Residues Arg-146, Lys-170, His-251, Arg-254, and His-277 contribute to the active site. Tyr-286 serves as the catalytic O-(3'-phospho-DNA)-tyrosine intermediate.

The protein belongs to the 'phage' integrase family. XerC subfamily. As to quaternary structure, forms a cyclic heterotetrameric complex composed of two molecules of XerC and two molecules of XerD.

The protein localises to the cytoplasm. Its function is as follows. Site-specific tyrosine recombinase, which acts by catalyzing the cutting and rejoining of the recombining DNA molecules. The XerC-XerD complex is essential to convert dimers of the bacterial chromosome into monomers to permit their segregation at cell division. It also contributes to the segregational stability of plasmids. This chain is Tyrosine recombinase XerC, found in Treponema denticola (strain ATCC 35405 / DSM 14222 / CIP 103919 / JCM 8153 / KCTC 15104).